The following is a 213-amino-acid chain: MKILVSGFDPFGGEKINPAIESVKLLPDSIKGNEIIKIEIPTVIGKSVDKLKEKIKEVKPDVVISVGQAGGREDITVERVAINVDDCRIKDNEGNQPIDEKIAEDGPDAYLLTLPIKAMVENIKSANIPASVSNTAGTFICNHVAYGMAHVRATEYPNMRTGFIHIPFLPEQVLNKPHTASMNLDTIAKALEKAIEAVIDNDEDIKVTGGKTH.

Residues glutamate 78, cysteine 141, and histidine 165 contribute to the active site.

The protein belongs to the peptidase C15 family. As to quaternary structure, homotetramer.

It is found in the cytoplasm. The enzyme catalyses Release of an N-terminal pyroglutamyl group from a polypeptide, the second amino acid generally not being Pro.. In terms of biological role, removes 5-oxoproline from various penultimate amino acid residues except L-proline. The protein is Pyrrolidone-carboxylate peptidase of Finegoldia magna (strain ATCC 29328 / DSM 20472 / WAL 2508) (Peptostreptococcus magnus).